The following is a 643-amino-acid chain: Macrolide export ATP-binding/permease protein MacB (643 aa).

One can recognise an ABC transporter domain in the interval 4-242 (IEIKELNRYF…VNNQSKAKSR (239 aa)). 40–47 (GQSGSGKS) contributes to the ATP binding site. The next 4 membrane-spanning stretches (helical) occupy residues 269-289 (LLTM…VALG), 523-543 (IAFI…LVSV), 572-592 (ILIC…IGGI), and 603-623 (VFST…GVIF).

The protein belongs to the ABC transporter superfamily. Macrolide exporter (TC 3.A.1.122) family. In terms of assembly, homodimer. Part of the tripartite efflux system MacAB-TolC, which is composed of an inner membrane transporter, MacB, a periplasmic membrane fusion protein, MacA, and an outer membrane component, TolC. The complex forms a large protein conduit and can translocate molecules across both the inner and outer membranes. Interacts with MacA.

It is found in the cell inner membrane. Its function is as follows. Part of the tripartite efflux system MacAB-TolC. MacB is a non-canonical ABC transporter that contains transmembrane domains (TMD), which form a pore in the inner membrane, and an ATP-binding domain (NBD), which is responsible for energy generation. Confers resistance against macrolides. This Mannheimia succiniciproducens (strain KCTC 0769BP / MBEL55E) protein is Macrolide export ATP-binding/permease protein MacB.